The sequence spans 255 residues: Thiazole synthase (255 aa).

Lys-95 acts as the Schiff-base intermediate with DXP in catalysis. 1-deoxy-D-xylulose 5-phosphate contacts are provided by residues Gly-156, 182–183, and 204–205; these read AG and NT.

The protein belongs to the ThiG family. As to quaternary structure, homotetramer. Forms heterodimers with either ThiH or ThiS.

It localises to the cytoplasm. The catalysed reaction is [ThiS sulfur-carrier protein]-C-terminal-Gly-aminoethanethioate + 2-iminoacetate + 1-deoxy-D-xylulose 5-phosphate = [ThiS sulfur-carrier protein]-C-terminal Gly-Gly + 2-[(2R,5Z)-2-carboxy-4-methylthiazol-5(2H)-ylidene]ethyl phosphate + 2 H2O + H(+). It functions in the pathway cofactor biosynthesis; thiamine diphosphate biosynthesis. Functionally, catalyzes the rearrangement of 1-deoxy-D-xylulose 5-phosphate (DXP) to produce the thiazole phosphate moiety of thiamine. Sulfur is provided by the thiocarboxylate moiety of the carrier protein ThiS. In vitro, sulfur can be provided by H(2)S. This is Thiazole synthase from Vibrio campbellii (strain ATCC BAA-1116).